The primary structure comprises 166 residues: Large ribosomal subunit protein bL19 (166 aa).

The protein belongs to the bacterial ribosomal protein bL19 family. Part of the 50S ribosomal subunit. Forms a cluster with proteins L3 and L14.

Its function is as follows. This protein is located at the 30S-50S ribosomal subunit interface and may play a role in the structure and function of the aminoacyl-tRNA binding site. Binds the 23S rRNA. This Deinococcus radiodurans (strain ATCC 13939 / DSM 20539 / JCM 16871 / CCUG 27074 / LMG 4051 / NBRC 15346 / NCIMB 9279 / VKM B-1422 / R1) protein is Large ribosomal subunit protein bL19 (rplS).